We begin with the raw amino-acid sequence, 691 residues long: MEESPLSRAPSRGGVNFLNVARTYIPNTKVECHYTLPPGTMPSASDWIGIFKVEAACVRDYHTFVWSSVPESTTDGSPIHTSVQFQASYLPKPGAQLYQFRYVNRQGQVCGQSPPFQFREPRPMDELVTLEEADGGSDILLVVPKATVLQNQLDESQQERNDLMQLKLQLEGQVTELRSRVQELERALATARQEHTELMEQYKGISRSHGEITEERDILSRQQGDHVARILELEDDIQTISEKVLTKEVELDRLRDTVKALTREQEKLLGQLKEVQADKEQSEAELQVAQQENHHLNLDLKEAKSWQEEQSAQAQRLKDKVAQMKDTLGQAQQRVAELEPLKEQLRGAQELAASSQQKATLLGEELASAAAARDRTIAELHRSRLEVAEVNGRLAELGLHLKEEKCQWSKERAGLLQSVEAEKDKILKLSAEILRLEKAVQEERTQNQVFKTELAREKDSSLVQLSESKRELTELRSALRVLQKEKEQLQEEKQELLEYMRKLEARLEKVADEKWNEDATTEDEEAAVGLSCPAALTDSEDESPEDMRLPPYGLCERGDPGSSPAGPREASPLVVISQPAPISPHLSGPAEDSSSDSEAEDEKSVLMAAVQSGGEEANLLLPELGSAFYDMASGFTVGTLSETSTGGPATPTWKECPICKERFPAESDKDALEDHMDGHFFFSTQDPFTFE.

The tract at residues 1-30 (MEESPLSRAPSRGGVNFLNVARTYIPNTKV) is p300 KIX-binding. Positions 1–190 (MEESPLSRAP…VQELERALAT (190 aa)) are N-terminal AD (CTNNB1 binding site). Serine 4 carries the post-translational modification Phosphoserine. Residues 45 to 125 (SDWIGIFKVE…FQFREPRPMD (81 aa)) are interaction with GATA1. 3 coiled-coil regions span residues 145 to 205 (KATV…YKGI), 232 to 339 (ELED…AELE), and 417 to 514 (QSVE…ADEK). The tract at residues 501–691 (RKLEARLEKV…FSTQDPFTFE (191 aa)) is C-terminal AD (CTNNB1 binding site); interaction with CCAR1. Positions 514 to 606 (KWNEDATTED…SEAEDEKSVL (93 aa)) are disordered. The segment at 653–679 (WKECPICKERFPAESDKDALEDHMDGH) adopts a UBZ1-type zinc-finger fold. Zn(2+) contacts are provided by cysteine 656, cysteine 659, histidine 675, and histidine 679.

This sequence belongs to the CALCOCO family. As to quaternary structure, part of a calphoglin complex consisting of CALCOCO1, PPA1 and PGM. Interacts with the bHLH-PAS domains of GRIP1, AHR and ARNT. Interacts with CTNNB1 via both its N- and C-terminal regions. Interacts with EP300. Interacts with CCAR1 (via N-terminus) and GATA1.

It is found in the cytoplasm. It localises to the nucleus. In terms of biological role, functions as a coactivator for aryl hydrocarbon and nuclear receptors (NR). Recruited to promoters through its contact with the N-terminal basic helix-loop-helix-Per-Arnt-Sim (PAS) domain of transcription factors or coactivators, such as NCOA2. During ER-activation acts synergistically in combination with other NCOA2-binding proteins, such as EP300, CREBBP and CARM1. Involved in the transcriptional activation of target genes in the Wnt/CTNNB1 pathway. Functions as a secondary coactivator in LEF1-mediated transcriptional activation via its interaction with CTNNB1. Coactivator function for nuclear receptors and LEF1/CTNNB1 involves differential utilization of two different activation regions. In association with CCAR1 enhances GATA1- and MED1-mediated transcriptional activation from the gamma-globin promoter during erythroid differentiation of K562 erythroleukemia cells. Seems to enhance inorganic pyrophosphatase thus activating phosphogluomutase (PMG). Probably functions as a component of the calphoglin complex, which is involved in linking cellular metabolism (phosphate and glucose metabolism) with other core functions including protein synthesis and degradation, calcium signaling and cell growth. The sequence is that of Calcium-binding and coiled-coil domain-containing protein 1 (CALCOCO1) from Homo sapiens (Human).